Here is a 239-residue protein sequence, read N- to C-terminus: MKDDVLKQQAHAAIQKKLGYAFRDISLLRQALTHRSHHAKHNERFEFVGDSILNYTVARMLFDAFPKLTEGELSRLRASLVNEGVLAEMAAEMNVGDGLYLGAGELKSGGFRRPSILADAMEAMFAAVSFDADFNTAEKVVRHLFADRVRRADFQNQAKDGKTALQEALQARRFALPKYRIEEQIGYANDSMFVISCDLGELGFVCRAKGTSRKAAEQEAAKEALKWLEEKLPLKRKKK.

One can recognise an RNase III domain in the interval 11 to 133; that stretch reads HAAIQKKLGY…MFAAVSFDAD (123 aa). Glutamate 46 provides a ligand contact to Mg(2+). Aspartate 50 is an active-site residue. The Mg(2+) site is built by aspartate 119 and glutamate 122. Residues 160-230 enclose the DRBM domain; the sequence is DGKTALQEAL…AKEALKWLEE (71 aa).

Belongs to the ribonuclease III family. As to quaternary structure, homodimer. Mg(2+) serves as cofactor.

It is found in the cytoplasm. It catalyses the reaction Endonucleolytic cleavage to 5'-phosphomonoester.. Functionally, digests double-stranded RNA. Involved in the processing of primary rRNA transcript to yield the immediate precursors to the large and small rRNAs (23S and 16S). Also processes some mRNAs, and tRNAs when they are encoded in the rRNA operon. In terms of biological role, CRISPR (clustered regularly interspaced short palindromic repeat) is an adaptive immune system that provides protection against mobile genetic elements (viruses, transposable elements and conjugative plasmids). CRISPR clusters contain spacers, sequences complementary to antecedent mobile elements, and target invading nucleic acids. CRISPR clusters are transcribed and processed into CRISPR RNA (crRNA). In this organism endogenous ribonuclease 3 and Cas9 are required for correct coprocessing of pre-crRNA and the trans-encoded small RNA (tracrRNA). Cas9, crRNA and tracRNA are required for cleavage of invading DNA. Involved in 3'-end processing but not 5'-end processing of crRNA and tracrRNA. The sequence is that of Ribonuclease 3 from Neisseria meningitidis serogroup C (strain 8013).